The primary structure comprises 193 residues: Ubiquitin-conjugating enzyme E2 E1 (193 aa).

Residues 1–45 are disordered; it reads MSDDDSRASTSSSSSSSSNQQTEKETNTPKKKESKVSMSKNSKLL. Position 2 is an N-acetylserine (Ser2). Positions 8–18 are enriched in low complexity; it reads ASTSSSSSSSS. Positions 22-35 are enriched in basic and acidic residues; the sequence is TEKETNTPKKKESK. Polar residues predominate over residues 36-45; that stretch reads VSMSKNSKLL. Residues 47-193 enclose the UBC core domain; that stretch reads TSAKRIQKEL…ARQWTKRYAT (147 aa). The active-site Glycyl thioester intermediate is the Cys131. Lys136 is covalently cross-linked (Glycyl lysine isopeptide (Lys-Gly) (interchain with G-Cter in ISG15)).

Belongs to the ubiquitin-conjugating enzyme family. Interacts with RNF14. ISGylation suppresses ubiquitin E2 enzyme activity. Post-translationally, autoubiquitinated in vitro.

The protein resides in the nucleus. It carries out the reaction S-ubiquitinyl-[E1 ubiquitin-activating enzyme]-L-cysteine + [E2 ubiquitin-conjugating enzyme]-L-cysteine = [E1 ubiquitin-activating enzyme]-L-cysteine + S-ubiquitinyl-[E2 ubiquitin-conjugating enzyme]-L-cysteine.. The catalysed reaction is S-ubiquitinyl-[E1 ubiquitin-activating enzyme]-L-cysteine + [acceptor protein]-L-lysine = [E1 ubiquitin-activating enzyme]-L-cysteine + N(6)-monoubiquitinyl-[acceptor protein]-L-lysine.. It functions in the pathway protein modification; protein ubiquitination. Functionally, accepts ubiquitin from the E1 complex and catalyzes its covalent attachment to other proteins. Catalyzes the covalent attachment of ISG15 to other proteins. Mediates the selective degradation of short-lived and abnormal proteins. In vitro also catalyzes 'Lys-48'-linked polyubiquitination. Catalyzes monoubiquitination of other proteins in both an E3-dependent and E3-independent manner. This chain is Ubiquitin-conjugating enzyme E2 E1, found in Homo sapiens (Human).